The sequence spans 381 residues: 2-epi-5-epi-valiolone synthase (381 aa).

NAD(+) is bound by residues D50, 81-84 (EEAK), 114-118 (GIVLD), 138-139 (TS), K151, K160, and 178-181 (FLDT). K151 is an active-site residue. The a divalent metal cation site is built by E193, H264, and H280.

Belongs to the sugar phosphate cyclases superfamily. EEVS family. NAD(+) serves as cofactor. It depends on Co(2+) as a cofactor.

The enzyme catalyses D-sedoheptulose 7-phosphate = 2-epi-5-epi-valiolone + phosphate. The protein operates within antibiotic biosynthesis. Catalyzes the cyclization of D-sedoheptulose 7-phosphate to 2-epi-5-epi-valiolone. Involved in cetoniacytone A biosynthesis. In Actinomyces sp, this protein is 2-epi-5-epi-valiolone synthase.